Here is a 188-residue protein sequence, read N- to C-terminus: Vascular endothelial growth factor A-A (188 aa).

Positions 1 to 23 (MNLVVYLIQLFLAALLHLSAVKA) are cleaved as a signal peptide. Disulfide bonds link cysteine 49/cysteine 91, cysteine 80/cysteine 125, and cysteine 84/cysteine 127. An N-linked (GlcNAc...) asparagine glycan is attached at asparagine 98.

The protein belongs to the PDGF/VEGF growth factor family. Homodimer; disulfide-linked. Isoform VEGF165 binds kdr and kdrl. As to expression, predominantly expressed in regions associated with active vascularization. From 15-16 hours post-fertilization (hpf), expressed in the anterior forebrain, the mesoderm underlying and lateral to the anterior hindbrain, the mesoderm underlying and lateral to the posterior hindbrain, and in the ventral medial portions of the somites. By 30-36 hpf, expression in the somites is decreased, while strong expression is observed in the region of the developing glomeruli and in the anterior portion of the pronephric ducts, the pharyngeal arches, and the brain. By 72 hpf, expression remains only in the pronephros region.

It is found in the secreted. Its function is as follows. Growth factor active in angiogenesis, vasculogenesis and endothelial cell growth. Induces endothelial cell proliferation, promotes cell migration, inhibits apoptosis, and induces permeabilization of blood vessels. Required for intersegmental vessel development in the tail during embryogenesis. Acts both upstream of kdr and tie1 to stimulate endothelial cell differentiation, and upstream of gata1 to stimulate hematopoietic cell differentiation. The sequence is that of Vascular endothelial growth factor A-A (vegfaa) from Danio rerio (Zebrafish).